A 146-amino-acid chain; its full sequence is Mitochondrial DnaJ homolog 2 (146 aa).

The 62-residue stretch at 85–146 (EALLILDISA…LERSVLLRKR (62 aa)) folds into the J domain.

As to quaternary structure, interacts with PAM16/TIM16 and is recruited by the PAM complex.

Its subcellular location is the mitochondrion inner membrane. Functionally, plays a role in mitochondrial biogenesis and protein folding. Participates in the translocation of transit peptide-containing proteins from the inner membrane into the mitochondrial matrix in an ATP-dependent manner, probably by stimulating activity of mtHSP70 (SSC1). The polypeptide is Mitochondrial DnaJ homolog 2 (MDJ2) (Saccharomyces cerevisiae (strain ATCC 204508 / S288c) (Baker's yeast)).